Here is a 250-residue protein sequence, read N- to C-terminus: MSGHSKWATIKRKKAATDQKRGNLFTKLVREITIAAKTGGGDPGGNPRLRLAIDTAKMNSMPNDNIQRAIKKGTGELEGVTYDEITYEGYGPGGIAIIIETATDNRNRTVADVRHIINRNNGSLGENGSVSWMFQRKGRLEVPRDGVSEEQLMEVLLDAGLEDLDSEDDNCFSVITAVKDLEAAKKALDEAGIGYENAKMDMIPDTLVEPGIDDASKAIKLIEALENCDDVQAVYSNLELSEQVMNSLDS.

The protein belongs to the TACO1 family.

Its subcellular location is the cytoplasm. This is Probable transcriptional regulatory protein Cphamn1_0542 from Chlorobium phaeobacteroides (strain BS1).